The primary structure comprises 172 residues: C-phycocyanin beta subunit (172 aa).

Position 72 is an N4-methylasparagine (N72). 2 residues coordinate (2R,3E)-phycocyanobilin: C82 and C153.

The protein belongs to the phycobiliprotein family. In terms of assembly, heterodimer of an alpha and a beta chain, which further assembles into trimers. The trimers assemble into hexamers, although these were not seen in the crystallographic studies. Part of 2 PBS rod complexes, the conventional CpcG-PBS rod and a photosystem I-specific CpcL-PBS rod, both of which include ferredoxin--NADP reductase (petH). Interacts with rod linker CpcC2 via the latter's N-terminal PBS-linker domain. In terms of processing, contains two covalently linked bilin chromophores.

The protein localises to the cellular thylakoid membrane. Functionally, light-harvesting photosynthetic bile pigment-protein from the phycobiliprotein complex (phycobilisome, PBS). Phycocyanin is the major phycobiliprotein in the PBS rod. The protein is C-phycocyanin beta subunit (cpcB) of Synechocystis sp. (strain ATCC 27184 / PCC 6803 / Kazusa).